Here is a 213-residue protein sequence, read N- to C-terminus: ATP phosphoribosyltransferase (213 aa).

Belongs to the ATP phosphoribosyltransferase family. Short subfamily. In terms of assembly, heteromultimer composed of HisG and HisZ subunits.

The protein localises to the cytoplasm. The catalysed reaction is 1-(5-phospho-beta-D-ribosyl)-ATP + diphosphate = 5-phospho-alpha-D-ribose 1-diphosphate + ATP. Its pathway is amino-acid biosynthesis; L-histidine biosynthesis; L-histidine from 5-phospho-alpha-D-ribose 1-diphosphate: step 1/9. Catalyzes the condensation of ATP and 5-phosphoribose 1-diphosphate to form N'-(5'-phosphoribosyl)-ATP (PR-ATP). Has a crucial role in the pathway because the rate of histidine biosynthesis seems to be controlled primarily by regulation of HisG enzymatic activity. This chain is ATP phosphoribosyltransferase, found in Bacillus licheniformis (strain ATCC 14580 / DSM 13 / JCM 2505 / CCUG 7422 / NBRC 12200 / NCIMB 9375 / NCTC 10341 / NRRL NRS-1264 / Gibson 46).